A 124-amino-acid chain; its full sequence is Seripauperin-23 (124 aa).

Residues 1–20 (MVKLTSIVAGVAAIAAGVAA) form the signal peptide.

The protein belongs to the SRP1/TIP1 family. Seripauperin subfamily. O-glycosylated.

It localises to the secreted. The protein resides in the cell wall. Component of the cell wall. In Saccharomyces cerevisiae (strain ATCC 204508 / S288c) (Baker's yeast), this protein is Seripauperin-23 (PAU23).